The chain runs to 124 residues: UPF0102 protein tll1737 (124 aa).

The protein belongs to the UPF0102 family.

This is UPF0102 protein tll1737 from Thermosynechococcus vestitus (strain NIES-2133 / IAM M-273 / BP-1).